The chain runs to 461 residues: Phosphoglucosamine mutase (461 aa).

S107 acts as the Phosphoserine intermediate in catalysis. Positions 107, 254, 256, and 258 each coordinate Mg(2+). At S107 the chain carries Phosphoserine.

Belongs to the phosphohexose mutase family. It depends on Mg(2+) as a cofactor. In terms of processing, activated by phosphorylation.

It carries out the reaction alpha-D-glucosamine 1-phosphate = D-glucosamine 6-phosphate. In terms of biological role, catalyzes the conversion of glucosamine-6-phosphate to glucosamine-1-phosphate. This chain is Phosphoglucosamine mutase, found in Bifidobacterium longum subsp. infantis (strain ATCC 15697 / DSM 20088 / JCM 1222 / NCTC 11817 / S12).